Reading from the N-terminus, the 300-residue chain is Protoheme IX farnesyltransferase (300 aa).

Transmembrane regions (helical) follow at residues 24 to 44 (GLAISVVFSSLAGYLLGIHEF), 46 to 66 (LETIYVLLMLAIGGYCMVGAS), 99 to 119 (AFTIATILTITGLTILYMINP), 122 to 142 (AMFGAISIFLYTCVYTPLKTV), 145 to 165 (LSVFVGAFPGAIPFMLGWVAA), 176 to 196 (LFLIQFFWQFPHFWAIGWFLF), 220 to 240 (IVLYTLWLTAASILPSFGYTG), 244 to 264 (LTPVSAIIVVLLGLWMLVYAI), and 275 to 295 (AKTLMLVSVAYISLIQVVYIL).

The protein belongs to the UbiA prenyltransferase family. Protoheme IX farnesyltransferase subfamily.

Its subcellular location is the cell inner membrane. The enzyme catalyses heme b + (2E,6E)-farnesyl diphosphate + H2O = Fe(II)-heme o + diphosphate. It participates in porphyrin-containing compound metabolism; heme O biosynthesis; heme O from protoheme: step 1/1. Converts heme B (protoheme IX) to heme O by substitution of the vinyl group on carbon 2 of heme B porphyrin ring with a hydroxyethyl farnesyl side group. In Flavobacterium psychrophilum (strain ATCC 49511 / DSM 21280 / CIP 103535 / JIP02/86), this protein is Protoheme IX farnesyltransferase.